The following is a 130-amino-acid chain: Prefoldin subunit alpha (130 aa).

It belongs to the prefoldin subunit alpha family. In terms of assembly, heterohexamer of two alpha and four beta subunits.

It is found in the cytoplasm. Its function is as follows. Molecular chaperone capable of stabilizing a range of proteins. Seems to fulfill an ATP-independent, HSP70-like function in archaeal de novo protein folding. The polypeptide is Prefoldin subunit alpha (Thermoplasma volcanium (strain ATCC 51530 / DSM 4299 / JCM 9571 / NBRC 15438 / GSS1)).